Consider the following 244-residue polypeptide: Phosphoadenosine 5'-phosphosulfate reductase (244 aa).

Catalysis depends on cysteine 239, which acts as the Nucleophile; cysteine thiosulfonate intermediate.

This sequence belongs to the PAPS reductase family. CysH subfamily.

It localises to the cytoplasm. It carries out the reaction [thioredoxin]-disulfide + sulfite + adenosine 3',5'-bisphosphate + 2 H(+) = [thioredoxin]-dithiol + 3'-phosphoadenylyl sulfate. It functions in the pathway sulfur metabolism; hydrogen sulfide biosynthesis; sulfite from sulfate: step 3/3. In terms of biological role, catalyzes the formation of sulfite from phosphoadenosine 5'-phosphosulfate (PAPS) using thioredoxin as an electron donor. In Klebsiella pneumoniae (strain 342), this protein is Phosphoadenosine 5'-phosphosulfate reductase.